The sequence spans 322 residues: MAAAVVQLADLPFIRQFGFSPLVVGIVCGMLYGNFLRGTMPADWGAGVHFTARRLLRIAVAFYGLNISIQQIAAVGLPGLAVSVGVVASTLLIGTVAGQRLLGLDRDTAMLTAAGSAICGAAAVLAFEPTLRAAPHKSAVAVATVVLFGTLSMFLYPVIYHAGWLPFDTQALGIYIGGTVHEVAQVVGAASNIDPATTEVATIVKMTRVALLVPVLLVLGFWLRASAAAGADGKSHAKLPVPWFAIGFLVLAIVNSLDILPSDLVTAIRKLDVFVLTMAMTALGIETRFAQIRKAGPRVMALGLVLYAWLVFGGYGIVKLAT.

The next 10 helical transmembrane spans lie at 13–35, 50–69, 76–98, 108–127, 139–161, 171–193, 209–231, 241–260, 273–292, and 296–318; these read FIRQ…YGNF, FTAR…NISI, GLPG…TVAG, TAML…VLAF, AVAV…VIYH, ALGI…ASNI, VALL…AAGA, VPWF…LDIL, VFVL…FAQI, and GPRV…YGIV.

This sequence belongs to the UPF0324 family.

The protein resides in the cell membrane. In Bordetella bronchiseptica (strain ATCC BAA-588 / NCTC 13252 / RB50) (Alcaligenes bronchisepticus), this protein is UPF0324 membrane protein BB4178.